The sequence spans 130 residues: Small ribosomal subunit protein uS9 (130 aa).

The protein belongs to the universal ribosomal protein uS9 family.

The chain is Small ribosomal subunit protein uS9 from Pseudomonas putida (strain W619).